The sequence spans 476 residues: Aspartyl/glutamyl-tRNA(Asn/Gln) amidotransferase subunit B (476 aa).

It belongs to the GatB/GatE family. GatB subfamily. As to quaternary structure, heterotrimer of A, B and C subunits.

The catalysed reaction is L-glutamyl-tRNA(Gln) + L-glutamine + ATP + H2O = L-glutaminyl-tRNA(Gln) + L-glutamate + ADP + phosphate + H(+). It carries out the reaction L-aspartyl-tRNA(Asn) + L-glutamine + ATP + H2O = L-asparaginyl-tRNA(Asn) + L-glutamate + ADP + phosphate + 2 H(+). In terms of biological role, allows the formation of correctly charged Asn-tRNA(Asn) or Gln-tRNA(Gln) through the transamidation of misacylated Asp-tRNA(Asn) or Glu-tRNA(Gln) in organisms which lack either or both of asparaginyl-tRNA or glutaminyl-tRNA synthetases. The reaction takes place in the presence of glutamine and ATP through an activated phospho-Asp-tRNA(Asn) or phospho-Glu-tRNA(Gln). In Bacillus licheniformis (strain ATCC 14580 / DSM 13 / JCM 2505 / CCUG 7422 / NBRC 12200 / NCIMB 9375 / NCTC 10341 / NRRL NRS-1264 / Gibson 46), this protein is Aspartyl/glutamyl-tRNA(Asn/Gln) amidotransferase subunit B.